Here is a 614-residue protein sequence, read N- to C-terminus: Probable pectinesterase/pectinesterase inhibitor 13 (614 aa).

The chain crosses the membrane as a helical span at residues 25–45 (IIVGTVSLLVVVAAIVGGAFA). The tract at residues 55–102 (QQQQQQQAKNHNKSGSGNNVVKDSDKKSPSPPTPSQKAPVSAAQSVKP) is disordered. N-linked (GlcNAc...) asparagine glycans are attached at residues Asn-66, Asn-128, Asn-197, Asn-243, Asn-301, Asn-351, and Asn-367. Positions 103-255 (GQGDKIIQTL…QVLTSNSLAL (153 aa)) are pectinesterase inhibitor 13. Residues 301–598 (NATVAKDGSG…YTVGPFLQGD (298 aa)) are pectinesterase 13. The substrate site is built by Thr-376 and Gln-406. Residue Asp-429 is the Proton donor; for pectinesterase activity of the active site. Cysteines 443 and 463 form a disulfide. Catalysis depends on Asp-450, which acts as the Nucleophile; for pectinesterase activity. Residues Arg-518 and Trp-520 each contribute to the substrate site. N-linked (GlcNAc...) asparagine glycans are attached at residues Asn-522 and Asn-588.

This sequence in the N-terminal section; belongs to the PMEI family. In the C-terminal section; belongs to the pectinesterase family. Expressed in flower buds.

It is found in the membrane. The enzyme catalyses [(1-&gt;4)-alpha-D-galacturonosyl methyl ester](n) + n H2O = [(1-&gt;4)-alpha-D-galacturonosyl](n) + n methanol + n H(+). The protein operates within glycan metabolism; pectin degradation; 2-dehydro-3-deoxy-D-gluconate from pectin: step 1/5. In terms of biological role, acts in the modification of cell walls via demethylesterification of cell wall pectin. This is Probable pectinesterase/pectinesterase inhibitor 13 (PME13) from Arabidopsis thaliana (Mouse-ear cress).